A 751-amino-acid polypeptide reads, in one-letter code: Putative tyrosine-protein kinase EpsB (751 aa).

Topologically, residues 1–31 (MTQNLSQPPAVNAPESELDLVRYLDVLVANR) are cytoplasmic. A helical membrane pass occupies residues 32–52 (WLIAGIAAVVMLLGATYAFLA). At 53–444 (RPVYEADVLV…VPEEPVKPKK (392 aa)) the chain is on the periplasmic side. A helical transmembrane segment spans residues 445 to 465 (LTVTALAGVLGVVLGVVAAFV). Residues 466-751 (RNTLFGGITE…PSAEAEAESA (286 aa)) lie on the Cytoplasmic side of the membrane.

It belongs to the etk/wzc family.

The protein localises to the cell inner membrane. It catalyses the reaction L-tyrosyl-[protein] + ATP = O-phospho-L-tyrosyl-[protein] + ADP + H(+). Functionally, probably involved in polymerization and/or export of exopolysaccharide EPS I which functions as a virulence factor. May be involved in an ATP-dependent process in the pathway for EPS I production, possibly export of the trimeric repeat units across the inner membrane or their polymerization. This chain is Putative tyrosine-protein kinase EpsB (epsB), found in Ralstonia nicotianae (strain ATCC BAA-1114 / GMI1000) (Ralstonia solanacearum).